Consider the following 256-residue polypeptide: Hypodermin-B (256 aa).

The first 22 residues, 1–22 (MLKFVILVCSVACVFGAVVPGG), serve as a signal peptide directing secretion. A propeptide spans 23–30 (MLPQLDGR) (activation peptide). Residues 31-254 (IVGGFEADIE…VRSWITENAK (224 aa)) form the Peptidase S1 domain. An intrachain disulfide couples Cys-56 to Cys-72. Active-site charge relay system residues include His-71 and Asp-116. 2 cysteine pairs are disulfide-bonded: Cys-180–Cys-197 and Cys-206–Cys-230. The Charge relay system role is filled by Ser-210.

It belongs to the peptidase S1 family.

It is found in the secreted. Functionally, protease that shows preferential cleavage after Arg and Lys residues. The protein is Hypodermin-B of Hypoderma lineatum (Early cattle grub).